The following is a 467-amino-acid chain: Mitochondrial distribution and morphology protein 10 (467 aa).

The protein belongs to the MDM10 family. Component of the ER-mitochondria encounter structure (ERMES) or MDM complex, composed of MMM1, MDM10, MDM12 and MDM34. Associates with the mitochondrial outer membrane sorting assembly machinery SAM(core) complex.

Its subcellular location is the mitochondrion outer membrane. Component of the ERMES/MDM complex, which serves as a molecular tether to connect the endoplasmic reticulum and mitochondria. Components of this complex are involved in the control of mitochondrial shape and protein biogenesis and may function in phospholipid exchange. MDM10 is involved in the late assembly steps of the general translocase of the mitochondrial outer membrane (TOM complex). Functions in the TOM40-specific route of the assembly of outer membrane beta-barrel proteins, including the association of TOM40 with the receptor TOM22 and small TOM proteins. Can associate with the SAM(core) complex as well as the MDM12-MMM1 complex, both involved in late steps of the major beta-barrel assembly pathway, that is responsible for biogenesis of all outer membrane beta-barrel proteins. May act as a switch that shuttles between both complexes and channels precursor proteins into the TOM40-specific pathway. Plays a role in mitochondrial morphology and in the inheritance of mitochondria. The polypeptide is Mitochondrial distribution and morphology protein 10 (Ajellomyces capsulatus (strain G186AR / H82 / ATCC MYA-2454 / RMSCC 2432) (Darling's disease fungus)).